A 240-amino-acid chain; its full sequence is Thiopurine S-methyltransferase (240 aa).

24–35 (WKDKWVTRHISF) lines the S-adenosyl-L-methionine pocket. Phe-35 serves as a coordination point for substrate. Lys-53 is modified (N6-acetyllysine). Residues Leu-64, Glu-85, 129 to 130 (SI), and Arg-147 each bind S-adenosyl-L-methionine.

The protein belongs to the class I-like SAM-binding methyltransferase superfamily. TPMT family. Monomer.

The protein resides in the cytoplasm. It carries out the reaction S-adenosyl-L-methionine + a thiopurine = S-adenosyl-L-homocysteine + a thiopurine S-methylether.. The enzyme catalyses mercaptopurine + S-adenosyl-L-methionine = 6-methylthiopurine + S-adenosyl-L-homocysteine + H(+). Functionally, catalyzes the S-methylation of thiopurine drugs such as 6-mercaptopurine (also called mercaptopurine, 6-MP or its brand name Purinethol) using S-adenosyl-L-methionine as the methyl donor. TPMT activity modulates the cytotoxic effects of thiopurine prodrugs. A natural substrate for this enzyme has yet to be identified. In Mus spretus (Western Mediterranean mouse), this protein is Thiopurine S-methyltransferase (Tpmt).